A 146-amino-acid chain; its full sequence is uncharacterized protein (146 aa).

This sequence to E.coli YmfS.

This is an uncharacterized protein from Escherichia coli (strain K12).